Consider the following 75-residue polypeptide: MTAPVTRAAPEPLAERRIALVDLLDRLLAGGVVLTGDLTLSIADVDLVRVDLKALISSVGEDVPSPWEPLREVRP.

This sequence belongs to the gas vesicle GvpA family.

The protein localises to the gas vesicle. Its function is as follows. Probably a minor component of the gas vesicle. Gas vesicles are hollow, gas filled proteinaceous nanostructures found in some microorganisms. It is not clear what function gas vesicles perform in soil bacteria. This is Gas vesicle protein S from Streptomyces sp. (strain CB03234).